Reading from the N-terminus, the 606-residue chain is Threonine--tRNA ligase (606 aa).

Residues 212–503 are catalytic; the sequence is DHRKLGVEMK…LIEHTAGELP (292 aa). Cysteine 304, histidine 355, and histidine 480 together coordinate Zn(2+).

This sequence belongs to the class-II aminoacyl-tRNA synthetase family. As to quaternary structure, homodimer. The cofactor is Zn(2+).

The protein localises to the cytoplasm. It carries out the reaction tRNA(Thr) + L-threonine + ATP = L-threonyl-tRNA(Thr) + AMP + diphosphate + H(+). Functionally, catalyzes the attachment of threonine to tRNA(Thr) in a two-step reaction: L-threonine is first activated by ATP to form Thr-AMP and then transferred to the acceptor end of tRNA(Thr). Also edits incorrectly charged L-seryl-tRNA(Thr). This is Threonine--tRNA ligase from Campylobacter curvus (strain 525.92).